Reading from the N-terminus, the 447-residue chain is Alpha-1,3-mannosyl-glycoprotein 2-beta-N-acetylglucosaminyltransferase (447 aa).

At 1-6 the chain is on the cytoplasmic side; the sequence is MLKKQS. The chain crosses the membrane as a helical; Signal-anchor for type II membrane protein span at residues 7–29; sequence AGLVLWGAIIFVGWNALLLLFFW. Residues 30–447 are Lumenal-facing; that stretch reads TRPAPGRLPS…TWNGYDPSWN (418 aa). An intrachain disulfide couples C115 to C145. Substrate contacts are provided by R117, D144, H190, and D212. D213 contributes to the Mn(2+) binding site. C239 and C305 are oxidised to a cystine. Catalysis depends on D291, which acts as the Proton acceptor. S322 contributes to the substrate binding site.

It belongs to the glycosyltransferase 13 family. Interacts with MGAT4D. Interacts with BRI3. Requires Mn(2+) as cofactor. In terms of tissue distribution, appears to be present in all tissues.

It localises to the golgi apparatus membrane. Its subcellular location is the cytoplasm. The protein localises to the perinuclear region. It carries out the reaction N(4)-(alpha-D-Man-(1-&gt;3)-[alpha-D-Man-(1-&gt;3)-[alpha-D-Man-(1-&gt;6)]-alpha-D-Man-(1-&gt;6)]-beta-D-Man-(1-&gt;4)-beta-D-GlcNAc-(1-&gt;4)-beta-D-GlcNAc)-L-asparaginyl-[protein] (N-glucan mannose isomer 5A1,2) + UDP-N-acetyl-alpha-D-glucosamine = N(4)-{beta-D-GlcNAc-(1-&gt;2)-alpha-D-Man-(1-&gt;3)-[alpha-D-Man-(1-&gt;3)-[alpha-D-Man-(1-&gt;6)]-alpha-D-Man-(1-&gt;6)]-beta-D-Man-(1-&gt;4)-beta-D-GlcNAc-(1-&gt;4)-beta-D-GlcNAc}-L-asparaginyl-[protein] + UDP + H(+). Its pathway is protein modification; protein glycosylation. Its function is as follows. Initiates complex N-linked carbohydrate formation. Essential for the conversion of high-mannose to hybrid and complex N-glycans. The protein is Alpha-1,3-mannosyl-glycoprotein 2-beta-N-acetylglucosaminyltransferase (Mgat1) of Rattus norvegicus (Rat).